The primary structure comprises 383 residues: Erythronate-4-phosphate dehydrogenase (383 aa).

Substrate contacts are provided by Ser-45 and Thr-66. NAD(+) is bound by residues Asp-146 and Thr-175. Arg-208 is an active-site residue. NAD(+) is bound at residue Asp-232. Residue Glu-237 is part of the active site. Catalysis depends on His-254, which acts as the Proton donor. Residue Gly-257 coordinates NAD(+).

Belongs to the D-isomer specific 2-hydroxyacid dehydrogenase family. PdxB subfamily. As to quaternary structure, homodimer.

It localises to the cytoplasm. The catalysed reaction is 4-phospho-D-erythronate + NAD(+) = (R)-3-hydroxy-2-oxo-4-phosphooxybutanoate + NADH + H(+). The protein operates within cofactor biosynthesis; pyridoxine 5'-phosphate biosynthesis; pyridoxine 5'-phosphate from D-erythrose 4-phosphate: step 2/5. Catalyzes the oxidation of erythronate-4-phosphate to 3-hydroxy-2-oxo-4-phosphonooxybutanoate. The protein is Erythronate-4-phosphate dehydrogenase of Chromohalobacter salexigens (strain ATCC BAA-138 / DSM 3043 / CIP 106854 / NCIMB 13768 / 1H11).